The following is a 246-amino-acid chain: 1-(5-phosphoribosyl)-5-[(5-phosphoribosylamino)methylideneamino] imidazole-4-carboxamide isomerase (246 aa).

D8 acts as the Proton acceptor in catalysis. The Proton donor role is filled by D130.

Belongs to the HisA/HisF family.

It is found in the cytoplasm. It carries out the reaction 1-(5-phospho-beta-D-ribosyl)-5-[(5-phospho-beta-D-ribosylamino)methylideneamino]imidazole-4-carboxamide = 5-[(5-phospho-1-deoxy-D-ribulos-1-ylimino)methylamino]-1-(5-phospho-beta-D-ribosyl)imidazole-4-carboxamide. It participates in amino-acid biosynthesis; L-histidine biosynthesis; L-histidine from 5-phospho-alpha-D-ribose 1-diphosphate: step 4/9. The sequence is that of 1-(5-phosphoribosyl)-5-[(5-phosphoribosylamino)methylideneamino] imidazole-4-carboxamide isomerase from Halorhodospira halophila (strain DSM 244 / SL1) (Ectothiorhodospira halophila (strain DSM 244 / SL1)).